We begin with the raw amino-acid sequence, 138 residues long: Cysteine desulfuration protein SufE (138 aa).

Catalysis depends on cysteine 51, which acts as the Cysteine persulfide intermediate.

The protein belongs to the SufE family. In terms of assembly, homodimer. Interacts with SufS.

The protein localises to the cytoplasm. It functions in the pathway cofactor biosynthesis; iron-sulfur cluster biosynthesis. Functionally, participates in cysteine desulfuration mediated by SufS. Cysteine desulfuration mobilizes sulfur from L-cysteine to yield L-alanine and constitutes an essential step in sulfur metabolism for biosynthesis of a variety of sulfur-containing biomolecules. Functions as a sulfur acceptor for SufS, by mediating the direct transfer of the sulfur atom from the S-sulfanylcysteine of SufS, an intermediate product of cysteine desulfuration process. The protein is Cysteine desulfuration protein SufE of Salmonella dublin (strain CT_02021853).